The following is a 243-amino-acid chain: UPF0246 protein MGAS9429_Spy1799 (243 aa).

The protein belongs to the UPF0246 family.

This chain is UPF0246 protein MGAS9429_Spy1799, found in Streptococcus pyogenes serotype M12 (strain MGAS9429).